Reading from the N-terminus, the 48-residue chain is Large ribosomal subunit protein bL33B (48 aa).

It belongs to the bacterial ribosomal protein bL33 family.

This is Large ribosomal subunit protein bL33B from Lactococcus lactis subsp. cremoris (strain MG1363).